The chain runs to 206 residues: Small ribosomal subunit protein uS4 (206 aa).

An S4 RNA-binding domain is found at 96–156 (TRLDNVVYRM…EKSRTQARIK (61 aa)).

It belongs to the universal ribosomal protein uS4 family. As to quaternary structure, part of the 30S ribosomal subunit. Contacts protein S5. The interaction surface between S4 and S5 is involved in control of translational fidelity.

In terms of biological role, one of the primary rRNA binding proteins, it binds directly to 16S rRNA where it nucleates assembly of the body of the 30S subunit. Functionally, with S5 and S12 plays an important role in translational accuracy. The chain is Small ribosomal subunit protein uS4 from Shewanella sp. (strain ANA-3).